A 125-amino-acid polypeptide reads, in one-letter code: Apoptosis inhibitor Rv3655c (125 aa).

Positions 1–33 (MEAALAIATLVLVLVLCLAGVTAVSMQVRCIDA) are cleaved as a signal peptide.

In terms of assembly, interacts with human E3 ubiquitin-protein ligase RNF213.

Its subcellular location is the secreted. It is found in the host cytoplasm. In terms of biological role, effector protein that participates in the suppression of macrophage apoptosis by blocking the extrinsic pathway. Interferes with caspase-8 activation and binds to the host E3 ubiquitin-protein ligase RNF213, whose fusion partners have anti-apoptotic function. The sequence is that of Apoptosis inhibitor Rv3655c from Mycobacterium tuberculosis (strain ATCC 25618 / H37Rv).